The sequence spans 957 residues: Glycine dehydrogenase (decarboxylating) 2 (957 aa).

N6-(pyridoxal phosphate)lysine is present on Lys-707.

This sequence belongs to the GcvP family. In terms of assembly, the glycine cleavage system is composed of four proteins: P, T, L and H. Pyridoxal 5'-phosphate is required as a cofactor.

It carries out the reaction N(6)-[(R)-lipoyl]-L-lysyl-[glycine-cleavage complex H protein] + glycine + H(+) = N(6)-[(R)-S(8)-aminomethyldihydrolipoyl]-L-lysyl-[glycine-cleavage complex H protein] + CO2. The glycine cleavage system catalyzes the degradation of glycine. The P protein binds the alpha-amino group of glycine through its pyridoxal phosphate cofactor; CO(2) is released and the remaining methylamine moiety is then transferred to the lipoamide cofactor of the H protein. The chain is Glycine dehydrogenase (decarboxylating) 2 (gcvP2) from Pseudomonas putida (strain ATCC 47054 / DSM 6125 / CFBP 8728 / NCIMB 11950 / KT2440).